Reading from the N-terminus, the 581-residue chain is METESGNQKNVMEEESTEKKKEVEKKKRSRVKQVLADIAKQVDFWFGDANLHKDRFLREQIEKSRDGYVDISLLVSFNKMKKLTTDGKLIARALRSSAVVELDLEGTRIRRKKPLGERPKDEDERTVYVELLPKNVNHSWIERVFGKCGNVVYISIPHYKSTGDPKGFAFVEFETKEQAAKAIEFLNNPPEEAPRKPGIFPKTVKNKPIPALRVVEEKKKKKKKKGRMKKEDNVQAKEENMDTTNTSISKMKRSRPTSEGSDIESTEPQKQSSKKKKKRDRVEASSLPEVRTGKRKRSSSEDAESLGPRSKVKKIIQKDIIKEPSEASKENRDIEISTEEEKDTGDLKDSSLLKTKRKHKKKHKERHKMGEEVIPLRVLSKSEWMDLKKEYLALQKASMASLKKTISQIKSESEMETDGGVPQKTGMKNEKTNSEECPTQEKVNATGPQFVSGVIVKIISTEPLPGRKQVRDTLAAISEVLYVDLLEGDTECHARFKTPEDAQAVINAYTEISKKHCWKLEILSGDHEQRYWQKILVDRQAKLNQPREKKRGTEKLITKAEKIRLAKTQQASKHIRFSEYD.

Position 1 is an N-acetylmethionine (methionine 1). Positions 1–10 (METESGNQKN) are enriched in polar residues. 3 disordered regions span residues 1 to 28 (METE…KKKR), 188 to 368 (NPPE…ERHK), and 410 to 440 (KSES…CPTQ). The 95-residue stretch at 28 to 122 (RSRVKQVLAD…KPLGERPKDE (95 aa)) folds into the HTH La-type RNA-binding domain. The RRM domain occupies 125–203 (RTVYVELLPK…PRKPGIFPKT (79 aa)). A compositionally biased stretch (basic residues) spans 219–228 (KKKKKKKGRM). Basic and acidic residues predominate over residues 229–240 (KKEDNVQAKEEN). A Glycyl lysine isopeptide (Lys-Gly) (interchain with G-Cter in SUMO2) cross-link involves residue lysine 237. A Phosphothreonine modification is found at threonine 257. Residues serine 258, serine 261, serine 273, serine 298, serine 299, and serine 300 each carry the phosphoserine modification. Residues 316-335 (IQKDIIKEPSEASKENRDIE) are compositionally biased toward basic and acidic residues. The residue at position 337 (serine 337) is a Phosphoserine. A Phosphothreonine modification is found at threonine 338. Serine 351 is modified (phosphoserine). Positions 354–367 (KTKRKHKKKHKERH) are enriched in basic residues. A Glycyl lysine isopeptide (Lys-Gly) (interchain with G-Cter in SUMO2) cross-link involves residue lysine 410. The region spanning 449 to 562 (QFVSGVIVKI…TEKLITKAEK (114 aa)) is the xRRM domain.

The protein belongs to the LARP7 family. In terms of assembly, core component of the 7SK RNP complex, at least composed of 7SK RNA, LARP7, MEPCE, HEXIM1 (or HEXIM2) and P-TEFb (composed of CDK9 and CCNT1/cyclin-T1). Interacts with METTL16. Interacts with RBM7; upon genotoxic stress this interaction is enhanced, triggering the release of inactive P-TEFb complex from the core, yielding to P-TEFb complex activation. Associates with box C/D small nucleolar ribonucleoprotein (snoRNP) complexes.

It localises to the nucleus. Its subcellular location is the nucleoplasm. Functionally, RNA-binding protein that specifically binds distinct small nuclear RNA (snRNAs) and regulates their processing and function. Specifically binds the 7SK snRNA (7SK RNA) and acts as a core component of the 7SK ribonucleoprotein (RNP) complex, thereby acting as a negative regulator of transcription elongation by RNA polymerase II. The 7SK RNP complex sequesters the positive transcription elongation factor b (P-TEFb) in a large inactive 7SK RNP complex preventing RNA polymerase II phosphorylation and subsequent transcriptional elongation. The 7SK RNP complex also promotes snRNA gene transcription by RNA polymerase II via interaction with the little elongation complex (LEC). LARP7 specifically binds to the highly conserved 3'-terminal U-rich stretch of 7SK RNA; on stimulation, remains associated with 7SK RNA, whereas P-TEFb is released from the complex. LARP7 also acts as a regulator of mRNA splicing fidelity by promoting U6 snRNA processing. Specifically binds U6 snRNAs and associates with a subset of box C/D RNP complexes: promotes U6 snRNA 2'-O-methylation by facilitating U6 snRNA loading into box C/D RNP complexes. U6 snRNA 2'-O-methylation is required for mRNA splicing fidelity. Binds U6 snRNAs with a 5'-CAGGG-3' sequence motif. U6 snRNA processing is required for spermatogenesis. The chain is La-related protein 7 from Macaca fascicularis (Crab-eating macaque).